The sequence spans 385 residues: MKKNIAILGSTGSIGTQTLDIIHLNPDLFDVYLLTANNNVDLLIRQAREYRPEIVVIANDQKYHLIQEALADLPIKVWCGAEAIADAVTAPDIDMVVTAMVGYSGLLPTIKAIEARKMIALANKETLVVAGELIMRLAQDNQVPILPVDSEHSAIFQALLGERQRPEKILLTASGGPFLHLTAEELQHATREQALRHPNWNMGAKVTIDSASLMNKGFEMIEAKWLFEMQPDEIEILVHPQSIIHSMVQFRDGSVKAQLGIPDMRLPISYALGITHRIPNDYPRVDFTATPLTFERPDLERFPNLSYAFDAIRLGGNAPCALNAANEIAVTAFLRDEISFTDMSRLLYEVMEKHELFREVSLPTFIETDSNTRRVAESLLPKFRR.

NADPH is bound by residues Thr-11, Gly-12, Ser-13, Ile-14, Asn-39, and Asn-123. Position 124 (Lys-124) interacts with 1-deoxy-D-xylulose 5-phosphate. Glu-125 provides a ligand contact to NADPH. Asp-149 lines the Mn(2+) pocket. 1-deoxy-D-xylulose 5-phosphate-binding residues include Ser-150, Glu-151, Ser-174, and His-197. Glu-151 provides a ligand contact to Mn(2+). Residue Gly-203 participates in NADPH binding. Residues Ser-210, Asn-215, Lys-216, and Glu-219 each coordinate 1-deoxy-D-xylulose 5-phosphate. A Mn(2+)-binding site is contributed by Glu-219.

It belongs to the DXR family. Mg(2+) is required as a cofactor. The cofactor is Mn(2+).

The enzyme catalyses 2-C-methyl-D-erythritol 4-phosphate + NADP(+) = 1-deoxy-D-xylulose 5-phosphate + NADPH + H(+). Its pathway is isoprenoid biosynthesis; isopentenyl diphosphate biosynthesis via DXP pathway; isopentenyl diphosphate from 1-deoxy-D-xylulose 5-phosphate: step 1/6. Functionally, catalyzes the NADPH-dependent rearrangement and reduction of 1-deoxy-D-xylulose-5-phosphate (DXP) to 2-C-methyl-D-erythritol 4-phosphate (MEP). The sequence is that of 1-deoxy-D-xylulose 5-phosphate reductoisomerase from Porphyromonas gingivalis (strain ATCC 33277 / DSM 20709 / CIP 103683 / JCM 12257 / NCTC 11834 / 2561).